We begin with the raw amino-acid sequence, 1086 residues long: MDAKDEKRFNLALQINNFKASLVEFNKLVEQTTAQKKEERAGIFIPKEDSIDYDKFYTSVQQIFGPEVKNQDVKCFYRKLCNNPDAAFDWCEIFGYFSTDEDSLTSQMDEENLVFLVSRKQRIVIAGSRRRDVIKCIVKVPQLDLLITASQKGLITVFNSQDTSWITGCDYLGQLKRIVATTERTIIVWDYKAQGSSQEHYFVIKPMDHCLLCVCVVPLPDQLCRDDILLGDDGGFVNKFTVSSDDFGLKQAKTKKKLQTQVLDSKNFKSVKRKLHNDWVMKIRYIPALNCFGSCSLDSVHSLVLESLKRLEDNLPVREFAMPRGANSFCYCGKANVIVTGGDDKVLRLWHPNISTKPVGKLVGHMFSITEIVSNEKEQHVISLSSAKVFRVWDIQTLSVLQVFHDSQGGPGDMQIYSMVYDANHGMLITGSGVIDMYPLTRMIQDTKQVPHTHEREVNVTLYNKYFHQVLTVCSESVIKVWELETGLQIYQILDPHGLSIELTCAAIDESGYLFATGAYNGTVKIWDFGSGQEMKMMPEGKDWVEEEHGLMRLFFLKPQVKQQHLILALERNGTIKIIQGKEDDIFLTVIWELPDAMPYLQYGSHIVHLKMSTKERTMAIPFPDVELIVQKTSQQTNYSPIVDVDVNCIDVFQTEGYNLIACGTTNGMIILWNFIAASVKEIYRPEDCFSTDPELDPKRFRINDIMFLFRSPECVRRSSQDSICSSTQCDSSKGPQSSKGSKQSIHDADVKGEHTDMVGEQQSASRKQPVPISFVEPQPPLLVSAHEDGHLRLWTLEGKLIKDMLPFTKHSAISLTSLYTDSCCRVLLAGNVEGHVILCSISSFMDPPHDEKKFKQLLSWRAHSLEIIQVIYVEEKQLVLTASIDGSVRIWNSTSGHYCGYFGQRRMFDLSQTSDFILPCDVNEYPIEIKEESKFTEKTQKYEYPLIFDRERWKKMSSMSLLFKRPPLSPFEVQHDFKFFKSLSSPKIRRYALEGFLTENREAGIVFGSLPIYRVPSPTSLRFLPLIGSEVQRDSVEGVYMKKKHDKVKREEAPEMTEGSRRKSLKRNLVPQINLASSFFPTTPK.

9 WD repeats span residues 129-168, 170-199, 321-360, 364-403, 411-448, 453-492, 498-537, 560-602, and 642-683; these read RRRDVIKCIVKVPQLDLLITASQKGLITVFNSQDTSWITG, DYLGQLKRIVATTERTIIVWDYKAQGSSQE, AMPRGANSFCYCGKANVIVTGGDDKVLRLWHPNISTKPVG, GHMFSITEIVSNEKEQHVISLSSAKVFRVWDIQTLSVLQV, PGDMQIYSMVYDANHGMLITGSGVIDMYPLTRMIQDTK, THEREVNVTLYNKYFHQVLTVCSESVIKVWELETGLQIYQ, GLSIELTCAAIDESGYLFATGAYNGTVKIWDFGSGQEMKM, QVKQ…PYLQ, and IVDV…VKEI. Residues 724–749 form a disordered region; the sequence is ICSSTQCDSSKGPQSSKGSKQSIHDA. Residues 732–744 are compositionally biased toward low complexity; sequence SSKGPQSSKGSKQ. 3 WD repeats span residues 765-806, 809-850, and 863-902; these read ASRK…KDML, TKHS…DPPH, and AHSLEIIQVIYVEEKQLVLTASIDGSVRIWNSTSGHYCGY. The tract at residues 1047–1069 is disordered; sequence DKVKREEAPEMTEGSRRKSLKRN. The segment covering 1049-1062 has biased composition (basic and acidic residues); it reads VKREEAPEMTEGSR.

The sequence is that of WD repeat-containing protein 64 (Wdr64) from Mus musculus (Mouse).